Here is a 328-residue protein sequence, read N- to C-terminus: Fructose-1,6-bisphosphatase class 1 (328 aa).

Residues glutamate 91, aspartate 110, leucine 112, and aspartate 113 each contribute to the Mg(2+) site. Residues 113–116 (DGSS), asparagine 205, and 257–259 (YLY) contribute to the substrate site. Position 277 (glutamate 277) interacts with Mg(2+).

Belongs to the FBPase class 1 family. In terms of assembly, homotetramer. Mg(2+) serves as cofactor.

Its subcellular location is the cytoplasm. The enzyme catalyses beta-D-fructose 1,6-bisphosphate + H2O = beta-D-fructose 6-phosphate + phosphate. It functions in the pathway carbohydrate biosynthesis; gluconeogenesis. This is Fructose-1,6-bisphosphatase class 1 from Azorhizobium caulinodans (strain ATCC 43989 / DSM 5975 / JCM 20966 / LMG 6465 / NBRC 14845 / NCIMB 13405 / ORS 571).